The sequence spans 130 residues: Small ribosomal subunit protein uS8 (130 aa).

This sequence belongs to the universal ribosomal protein uS8 family. As to quaternary structure, part of the 30S ribosomal subunit. Contacts proteins S5 and S12.

Its function is as follows. One of the primary rRNA binding proteins, it binds directly to 16S rRNA central domain where it helps coordinate assembly of the platform of the 30S subunit. The chain is Small ribosomal subunit protein uS8 from Proteus mirabilis (strain HI4320).